Reading from the N-terminus, the 902-residue chain is Protein translocase subunit SecA (902 aa).

ATP is bound by residues Gln-87, 105–109 (GEGKT), and Asp-512. The disordered stretch occupies residues 847–902 (DAERLARQQQLSHLDDQSAAAQEMASQTGDRKIGRNDPCPCGSGKKYKQCHGRLNA). Zn(2+) is bound by residues Cys-885, Cys-887, Cys-896, and His-897. Basic residues predominate over residues 891–902 (KKYKQCHGRLNA).

It belongs to the SecA family. Monomer and homodimer. Part of the essential Sec protein translocation apparatus which comprises SecA, SecYEG and auxiliary proteins SecDF-YajC and YidC. Requires Zn(2+) as cofactor.

It localises to the cell inner membrane. The protein resides in the cytoplasm. It catalyses the reaction ATP + H2O + cellular proteinSide 1 = ADP + phosphate + cellular proteinSide 2.. Part of the Sec protein translocase complex. Interacts with the SecYEG preprotein conducting channel. Has a central role in coupling the hydrolysis of ATP to the transfer of proteins into and across the cell membrane, serving both as a receptor for the preprotein-SecB complex and as an ATP-driven molecular motor driving the stepwise translocation of polypeptide chains across the membrane. This is Protein translocase subunit SecA from Edwardsiella ictaluri (strain 93-146).